The following is a 217-amino-acid chain: Translation initiation factor IF-3 (217 aa).

Residues 179–217 (PRKTPLVKKEEKEAAPTKAVRTIPAPPRPTAAKVAAQQA) are disordered.

Belongs to the IF-3 family. Monomer.

The protein resides in the cytoplasm. IF-3 binds to the 30S ribosomal subunit and shifts the equilibrium between 70S ribosomes and their 50S and 30S subunits in favor of the free subunits, thus enhancing the availability of 30S subunits on which protein synthesis initiation begins. This is Translation initiation factor IF-3 from Parasynechococcus marenigrum (strain WH8102).